A 125-amino-acid polypeptide reads, in one-letter code: Fluoride-specific ion channel FluC (125 aa).

Helical transmembrane passes span 4–24 and 34–54; these read LWVA…GVWI and YGTF…LTVL. Residues Gly74 and Thr77 each coordinate Na(+). Residues 99–119 traverse the membrane as a helical segment; that stretch reads VLYFGSSLALGILAVWLGMVV.

The protein belongs to the fluoride channel Fluc/FEX (TC 1.A.43) family.

Its subcellular location is the cell inner membrane. It catalyses the reaction fluoride(in) = fluoride(out). Its activity is regulated as follows. Na(+) is not transported, but it plays an essential structural role and its presence is essential for fluoride channel function. Fluoride-specific ion channel. Important for reducing fluoride concentration in the cell, thus reducing its toxicity. In Acidobacterium capsulatum (strain ATCC 51196 / DSM 11244 / BCRC 80197 / JCM 7670 / NBRC 15755 / NCIMB 13165 / 161), this protein is Fluoride-specific ion channel FluC.